We begin with the raw amino-acid sequence, 222 residues long: Cytidylate kinase (222 aa).

Gly-7–Ser-15 contacts ATP.

This sequence belongs to the cytidylate kinase family. Type 1 subfamily.

It localises to the cytoplasm. The catalysed reaction is CMP + ATP = CDP + ADP. The enzyme catalyses dCMP + ATP = dCDP + ADP. This chain is Cytidylate kinase, found in Borrelia turicatae (strain 91E135).